The chain runs to 107 residues: Ig kappa chain V-VI region NQ2-17.4.1 (107 aa).

Positions 1–23 (QIVLTQSPAIMSASPGQKVTMTC) are framework-1. A disulfide bridge links Cys23 with Cys87. The interval 24-33 (SASSSVSYMH) is complementarity-determining-1. Positions 34 to 48 (WYQQKSGTSPKRWIY) are framework-2. The complementarity-determining-2 stretch occupies residues 49-55 (DTSKLAS). A framework-3 region spans residues 56 to 87 (GVPARFSGSGSATSYSLTITSMQAEDAATYYC). Residues 88 to 96 (QQWSSNPLT) are complementarity-determining-3. Positions 97–106 (FGAGTKLELK) are framework-4.

Functionally, anti-2-phenyl oxazolone (PHOX) Antibody. In Mus musculus (Mouse), this protein is Ig kappa chain V-VI region NQ2-17.4.1.